The following is a 341-amino-acid chain: Killer cell immunoglobulin-like receptor 2DL3 (341 aa).

Positions 1-21 are cleaved as a signal peptide; sequence MSLMVVSMVCVGFFLLQGAWP. Residues 22-245 lie on the Extracellular side of the membrane; the sequence is HEGVHRKPSL…SETGNPRHLH (224 aa). Ig-like C2-type domains lie at 42-107 and 142-205; these read EETV…VTHS and GESV…FRDS. Disulfide bonds link C49–C100 and C149–C198. Residues N84, N178, and N211 are each glycosylated (N-linked (GlcNAc...) asparagine). Residues 220–239 are disordered; it reads VTGNPSNSWPSPTEPSSETG. Low complexity predominate over residues 223-239; that stretch reads NPSNSWPSPTEPSSETG. A helical transmembrane segment spans residues 246–265; the sequence is VLIGTSVVIILFILLLFFLL. At 266–341 the chain is on the cytoplasmic side; the sequence is HRWCCNKKNA…VYTELPNAEP (76 aa).

Belongs to the immunoglobulin superfamily. Interacts with ARRB2.

Its subcellular location is the cell membrane. In terms of biological role, receptor on natural killer (NK) cells for HLA-C alleles (HLA-Cw1, HLA-Cw3 and HLA-Cw7). Inhibits the activity of NK cells thus preventing cell lysis. The protein is Killer cell immunoglobulin-like receptor 2DL3 of Homo sapiens (Human).